Consider the following 107-residue polypeptide: UPF0060 membrane protein M446_5886 (107 aa).

Transmembrane regions (helical) follow at residues 4 to 24 (LLAY…IWAW), 31 to 51 (PLWL…LTRV), 59 to 79 (AYAA…WAAE), and 85 to 105 (RWDL…LLGP).

This sequence belongs to the UPF0060 family.

The protein localises to the cell inner membrane. The polypeptide is UPF0060 membrane protein M446_5886 (Methylobacterium sp. (strain 4-46)).